Consider the following 339-residue polypeptide: Adenosine deaminase (339 aa).

Residues His-15 and His-17 each coordinate Zn(2+). Residues His-17, Asp-19, and Gly-172 each contribute to the substrate site. His-199 contributes to the Zn(2+) binding site. The active-site Proton donor is Glu-202. Zn(2+) is bound at residue Asp-279.

The protein belongs to the metallo-dependent hydrolases superfamily. Adenosine and AMP deaminases family. Adenosine deaminase subfamily. Requires Zn(2+) as cofactor.

It carries out the reaction adenosine + H2O + H(+) = inosine + NH4(+). It catalyses the reaction 2'-deoxyadenosine + H2O + H(+) = 2'-deoxyinosine + NH4(+). In terms of biological role, catalyzes the hydrolytic deamination of adenosine and 2-deoxyadenosine. This Lacticaseibacillus paracasei (strain ATCC 334 / BCRC 17002 / CCUG 31169 / CIP 107868 / KCTC 3260 / NRRL B-441) (Lactobacillus paracasei) protein is Adenosine deaminase.